The chain runs to 471 residues: Cysteine--tRNA ligase (471 aa).

C30 lines the Zn(2+) pocket. Positions 32-42 (PTVYNFAHIGN) match the 'HIGH' region motif. Zn(2+) contacts are provided by C212, H237, and E241. Residues 270–274 (KMSKS) carry the 'KMSKS' region motif. K273 serves as a coordination point for ATP.

The protein belongs to the class-I aminoacyl-tRNA synthetase family. Monomer. Requires Zn(2+) as cofactor.

It localises to the cytoplasm. It carries out the reaction tRNA(Cys) + L-cysteine + ATP = L-cysteinyl-tRNA(Cys) + AMP + diphosphate. This Leptospira interrogans serogroup Icterohaemorrhagiae serovar copenhageni (strain Fiocruz L1-130) protein is Cysteine--tRNA ligase.